A 91-amino-acid chain; its full sequence is ATP synthase subunit c (91 aa).

Transmembrane regions (helical) follow at residues 4–24 (FTMCVLAAGIGMALGTLGTGI) and 53–73 (IGLAMIESLAIYALVVCLIIL).

The protein belongs to the ATPase C chain family. As to quaternary structure, F-type ATPases have 2 components, F(1) - the catalytic core - and F(0) - the membrane proton channel. F(1) has five subunits: alpha(3), beta(3), gamma(1), delta(1), epsilon(1). F(0) has three main subunits: a(1), b(2) and c(10-14). The alpha and beta chains form an alternating ring which encloses part of the gamma chain. F(1) is attached to F(0) by a central stalk formed by the gamma and epsilon chains, while a peripheral stalk is formed by the delta and b chains.

It localises to the cell inner membrane. In terms of biological role, f(1)F(0) ATP synthase produces ATP from ADP in the presence of a proton or sodium gradient. F-type ATPases consist of two structural domains, F(1) containing the extramembraneous catalytic core and F(0) containing the membrane proton channel, linked together by a central stalk and a peripheral stalk. During catalysis, ATP synthesis in the catalytic domain of F(1) is coupled via a rotary mechanism of the central stalk subunits to proton translocation. Functionally, key component of the F(0) channel; it plays a direct role in translocation across the membrane. A homomeric c-ring of between 10-14 subunits forms the central stalk rotor element with the F(1) delta and epsilon subunits. This is ATP synthase subunit c from Geotalea daltonii (strain DSM 22248 / JCM 15807 / FRC-32) (Geobacter daltonii).